Consider the following 87-residue polypeptide: Small ribosomal subunit protein bS20 (87 aa).

The protein belongs to the bacterial ribosomal protein bS20 family.

Its function is as follows. Binds directly to 16S ribosomal RNA. In Parvibaculum lavamentivorans (strain DS-1 / DSM 13023 / NCIMB 13966), this protein is Small ribosomal subunit protein bS20.